We begin with the raw amino-acid sequence, 423 residues long: Gamma-glutamyl phosphate reductase (423 aa).

A compositionally biased stretch (low complexity) spans 1–14 (MTLQAAPRSAAAQQ). A disordered region spans residues 1-25 (MTLQAAPRSAAAQQREPDLRQEVHD). Basic and acidic residues predominate over residues 15 to 25 (REPDLRQEVHD).

It belongs to the gamma-glutamyl phosphate reductase family.

Its subcellular location is the cytoplasm. It catalyses the reaction L-glutamate 5-semialdehyde + phosphate + NADP(+) = L-glutamyl 5-phosphate + NADPH + H(+). The protein operates within amino-acid biosynthesis; L-proline biosynthesis; L-glutamate 5-semialdehyde from L-glutamate: step 2/2. Catalyzes the NADPH-dependent reduction of L-glutamate 5-phosphate into L-glutamate 5-semialdehyde and phosphate. The product spontaneously undergoes cyclization to form 1-pyrroline-5-carboxylate. The chain is Gamma-glutamyl phosphate reductase from Mycobacterium ulcerans (strain Agy99).